Here is a 361-residue protein sequence, read N- to C-terminus: ETS translocation variant 3-like protein (361 aa).

Residues 39-120 (IQLWHFILEL…KGKRFTYKFN (82 aa)) constitute a DNA-binding region (ETS). Positions 178–201 (LTGQQTPRGPPETSGDKKGSSSSV) are disordered.

This sequence belongs to the ETS family.

It is found in the nucleus. In terms of biological role, transcriptional regulator. The chain is ETS translocation variant 3-like protein (ETV3L) from Homo sapiens (Human).